A 142-amino-acid polypeptide reads, in one-letter code: Large ribosomal subunit protein uL13 (142 aa).

The protein belongs to the universal ribosomal protein uL13 family. As to quaternary structure, part of the 50S ribosomal subunit.

Its function is as follows. This protein is one of the early assembly proteins of the 50S ribosomal subunit, although it is not seen to bind rRNA by itself. It is important during the early stages of 50S assembly. This Vesicomyosocius okutanii subsp. Calyptogena okutanii (strain HA) protein is Large ribosomal subunit protein uL13.